The chain runs to 373 residues: Peroxisomal biogenesis factor 3 (373 aa).

The Cytoplasmic portion of the chain corresponds to 1–15; it reads MLRSVWNFLKRHKKK. The interval 1 to 45 is targeting to peroxisomes; sequence MLRSVWNFLKRHKKKCIFLGTVLGGVYILGKYGQKKIREIQEREA. The chain crosses the membrane as a helical span at residues 16 to 36; it reads CIFLGTVLGGVYILGKYGQKK. Topologically, residues 37 to 116 are peroxisomal; it reads IREIQEREAA…LKIISFTRST (80 aa). Residues 117-140 form a helical membrane-spanning segment; sequence VAVYSTCMLVVLLRVQLNIIGGYI. Residues 120–136 form an interaction with PEX19 region; the sequence is YSTCMLVVLLRVQLNII. At 141 to 373 the chain is on the cytoplasmic side; it reads YLDNAAVGKN…AFSTPQQLEK (233 aa).

The protein belongs to the peroxin-3 family. Interacts with PEX19. As to expression, found in all examined tissues.

The protein localises to the peroxisome membrane. Its function is as follows. Involved in peroxisome biosynthesis and integrity. Assembles membrane vesicles before the matrix proteins are translocated. As a docking factor for PEX19, is necessary for the import of peroxisomal membrane proteins in the peroxisomes. This is Peroxisomal biogenesis factor 3 (PEX3) from Homo sapiens (Human).